Consider the following 155-residue polypeptide: uncharacterized protein (155 aa).

The next 2 helical transmembrane spans lie at 33-53 and 83-103; these read ITLL…LFLL and IGAV…GIWV.

This sequence to E.coli YdgK.

It localises to the cell membrane. This is an uncharacterized protein from Synechocystis sp. (strain ATCC 27184 / PCC 6803 / Kazusa).